Here is a 355-residue protein sequence, read N- to C-terminus: Peptide chain release factor 1 (355 aa).

Gln-231 is subject to N5-methylglutamine. Basic and acidic residues predominate over residues 283–292; that stretch reads IAKETSERKS. The disordered stretch occupies residues 283 to 303; the sequence is IAKETSERKSQVGTGDRSGRI.

It belongs to the prokaryotic/mitochondrial release factor family. In terms of processing, methylated by PrmC. Methylation increases the termination efficiency of RF1.

The protein localises to the cytoplasm. Peptide chain release factor 1 directs the termination of translation in response to the peptide chain termination codons UAG and UAA. This chain is Peptide chain release factor 1, found in Campylobacter curvus (strain 525.92).